A 139-amino-acid chain; its full sequence is D-ribose pyranase (139 aa).

The active-site Proton donor is the His20. Substrate contacts are provided by residues Asp28, His106, and 128–130 (YAN).

This sequence belongs to the RbsD / FucU family. RbsD subfamily. Homodecamer.

Its subcellular location is the cytoplasm. The enzyme catalyses beta-D-ribopyranose = beta-D-ribofuranose. It participates in carbohydrate metabolism; D-ribose degradation; D-ribose 5-phosphate from beta-D-ribopyranose: step 1/2. Its function is as follows. Catalyzes the interconversion of beta-pyran and beta-furan forms of D-ribose. The protein is D-ribose pyranase of Escherichia coli O139:H28 (strain E24377A / ETEC).